Consider the following 171-residue polypeptide: uncharacterized protein (171 aa).

Disordered regions lie at residues 68–112 and 152–171; these read NKNN…DQPY and LPEK…SIKN. A compositionally biased stretch (acidic residues) spans 161-171; the sequence is DDEDDMFSIKN.

This sequence belongs to the asfivirus H171R family.

It localises to the virion. This is an uncharacterized protein from African swine fever virus (strain Badajoz 1971 Vero-adapted) (Ba71V).